Reading from the N-terminus, the 214-residue chain is tRNA (guanine-N(7)-)-methyltransferase (214 aa).

S-adenosyl-L-methionine is bound by residues Glu-43, Glu-68, Asp-95, and Asp-117. The active site involves Asp-117. Residues Lys-121, Asp-153, and 190 to 193 (TEYE) contribute to the substrate site.

Belongs to the class I-like SAM-binding methyltransferase superfamily. TrmB family.

It carries out the reaction guanosine(46) in tRNA + S-adenosyl-L-methionine = N(7)-methylguanosine(46) in tRNA + S-adenosyl-L-homocysteine. It participates in tRNA modification; N(7)-methylguanine-tRNA biosynthesis. In terms of biological role, catalyzes the formation of N(7)-methylguanine at position 46 (m7G46) in tRNA. The protein is tRNA (guanine-N(7)-)-methyltransferase of Staphylococcus aureus (strain Mu3 / ATCC 700698).